The following is a 281-amino-acid chain: Protease HtpX homolog (281 aa).

Helical transmembrane passes span 6-26 (VWLL…AIGG) and 28-48 (SGAL…YYYS). Zn(2+) is bound at residue His-130. Glu-131 is a catalytic residue. His-134 contacts Zn(2+). The next 2 helical transmembrane spans lie at 140–160 (VLIG…SNIV) and 181–201 (IASL…QLAI). Glu-206 lines the Zn(2+) pocket.

This sequence belongs to the peptidase M48B family. Requires Zn(2+) as cofactor.

The protein resides in the cell membrane. This Pelotomaculum thermopropionicum (strain DSM 13744 / JCM 10971 / SI) protein is Protease HtpX homolog.